A 172-amino-acid chain; its full sequence is Mitochondrial import inner membrane translocase subunit Tim17-B (172 aa).

Cys9 and Cys78 are joined by a disulfide. The next 3 helical transmembrane spans lie at 17 to 37 (CGGA…IKGF), 61 to 77 (QIGG…STID), and 113 to 133 (VGSA…GILL). Positions 146–172 (PFLEDPSQLPPKDGTPAPGYPSYQQYH) are disordered.

The protein belongs to the Tim17/Tim22/Tim23 family. Component of the TIM23 complex at least composed of TIMM23, TIMM17 (TIMM17A or TIMM17B) and TIMM50. The complex interacts with the TIMM44 component of the PAM complex and with DNAJC15. In terms of processing, forms one disulfide bond. In terms of tissue distribution, expression is abundant in heart and skeletal muscle, intermediate in brain, and weak in pancreas, placenta, kidney and liver.

It is found in the mitochondrion inner membrane. Its function is as follows. Essential component of the TIM23 complex, a complex that mediates the translocation of transit peptide-containing proteins across the mitochondrial inner membrane. The polypeptide is Mitochondrial import inner membrane translocase subunit Tim17-B (TIMM17B) (Homo sapiens (Human)).